The sequence spans 105 residues: Large ribosomal subunit protein bL21 (105 aa).

It belongs to the bacterial ribosomal protein bL21 family. In terms of assembly, part of the 50S ribosomal subunit. Contacts protein L20.

Functionally, this protein binds to 23S rRNA in the presence of protein L20. This Rickettsia peacockii (strain Rustic) protein is Large ribosomal subunit protein bL21.